Reading from the N-terminus, the 61-residue chain is Photosystem II reaction center protein K (61 aa).

Residues 1–24 (MLNIFSLMYICLNSALYSSSFLFA) constitute a propeptide that is removed on maturation. The helical transmembrane segment at 40-60 (MPVIPVLFFLLAFVWQAAVSF) threads the bilayer.

Belongs to the PsbK family. PSII is composed of 1 copy each of membrane proteins PsbA, PsbB, PsbC, PsbD, PsbE, PsbF, PsbH, PsbI, PsbJ, PsbK, PsbL, PsbM, PsbT, PsbX, PsbY, PsbZ, Psb30/Ycf12, at least 3 peripheral proteins of the oxygen-evolving complex and a large number of cofactors. It forms dimeric complexes.

Its subcellular location is the plastid. The protein localises to the chloroplast thylakoid membrane. Its function is as follows. One of the components of the core complex of photosystem II (PSII). PSII is a light-driven water:plastoquinone oxidoreductase that uses light energy to abstract electrons from H(2)O, generating O(2) and a proton gradient subsequently used for ATP formation. It consists of a core antenna complex that captures photons, and an electron transfer chain that converts photonic excitation into a charge separation. The protein is Photosystem II reaction center protein K of Citrus sinensis (Sweet orange).